The primary structure comprises 377 residues: Rhodopsin, long-wavelength (377 aa).

Topologically, residues 1-51 (MIAVSGPSYEAFSYGGQARFNNQTVVDKVPPDMLHLIDANWYQYPPLNPMW) are extracellular. Residue N22 is glycosylated (N-linked (GlcNAc...) asparagine). A helical transmembrane segment spans residues 52-76 (HGILGFVIGMLGFVSAMGNGMVVYI). The Cytoplasmic portion of the chain corresponds to 77–88 (FLSTKSLRTPSN). A helical membrane pass occupies residues 89–113 (LFVINLAISNFLMMFCMSPPMVINC). At 114-128 (YYETWVLGPLFCQIY) the chain is on the extracellular side. C125 and C202 are disulfide-bonded. Residues 129 to 148 (AMLGSLFGCGSIWTMTMIAF) form a helical membrane-spanning segment. The Cytoplasmic segment spans residues 149–167 (DRYNVIVKGLSGKPLSING). A helical transmembrane segment spans residues 168 to 191 (ALIRIIAIWLFSLGWTIAPMFGWN). The Extracellular segment spans residues 192–215 (RYVPEGNMTACGTDYFNRGLLSAS). N-linked (GlcNAc...) asparagine glycosylation occurs at N198. Residues 216-243 (YLVCYGIWVYFVPLFLIIYSYWFIIQAV) form a helical membrane-spanning segment. The Cytoplasmic segment spans residues 244-278 (AAHEKNMREQAKKMNVASLRSSENQNTSAECKLAK). A helical membrane pass occupies residues 279–302 (VALMTISLWFMAWTPYLVINFSGI). Over 303–309 (FNLVKIS) the chain is Extracellular. Residues 310-334 (PLFTIWGSLFAKANAVYNPIVYGIS) form a helical membrane-spanning segment. K321 carries the post-translational modification N6-(retinylidene)lysine. Topologically, residues 335–377 (HPKYRAALFAKFPSLACAAEPSSDAVSTTSGTTTVTDNEKSNA) are cytoplasmic. Residues 357–370 (SDAVSTTSGTTTVT) show a composition bias toward low complexity. Residues 357-377 (SDAVSTTSGTTTVTDNEKSNA) are disordered.

It belongs to the G-protein coupled receptor 1 family. Opsin subfamily. In terms of processing, phosphorylated on some or all of the serine and threonine residues present in the C-terminal region.

It is found in the membrane. In terms of biological role, visual pigments are the light-absorbing molecules that mediate vision. They consist of an apoprotein, opsin, covalently linked to 11-cis-retinal. The chain is Rhodopsin, long-wavelength from Apis mellifera (Honeybee).